The following is a 315-amino-acid chain: MTIDSGFNHITVLLDEAVEALALRADGCYLDGTFGRGGHSRLILSKLGPQGRLLGFDKDPQAIATGQALAAEDGRFVIVQRSFAELGAEVAERGLHGKVSGVLLDLGVSSPQLDDPERGFSFLNDGPLDMRMNPGQGISAAEFIATAPVEEIARVFKEYGEERFAGRMARAVVERREKQPFTRTADLAEVLKVANPAWEKGKNPATRAFQGLRIHVNNELGDLEAGLEAALDALEVGGRLAVISFHSLEDRIVKLFMRKLVKGEADNLPRNLPVQHKVFEPKIKLIGKAQFASEAELKANPRSRSAVMRVAEKLR.

S-adenosyl-L-methionine is bound by residues 37–39, Asp-57, Phe-83, Asp-105, and Gln-112; that span reads GGH.

This sequence belongs to the methyltransferase superfamily. RsmH family.

It localises to the cytoplasm. The enzyme catalyses cytidine(1402) in 16S rRNA + S-adenosyl-L-methionine = N(4)-methylcytidine(1402) in 16S rRNA + S-adenosyl-L-homocysteine + H(+). Specifically methylates the N4 position of cytidine in position 1402 (C1402) of 16S rRNA. This is Ribosomal RNA small subunit methyltransferase H from Pseudomonas putida (strain GB-1).